Consider the following 72-residue polypeptide: Translation initiation factor IF-1 (72 aa).

Residues 1–72 (MAKDDVIEIQ…TKGRITYRFK (72 aa)) form the S1-like domain.

This sequence belongs to the IF-1 family. In terms of assembly, component of the 30S ribosomal translation pre-initiation complex which assembles on the 30S ribosome in the order IF-2 and IF-3, IF-1 and N-formylmethionyl-tRNA(fMet); mRNA recruitment can occur at any time during PIC assembly.

The protein localises to the cytoplasm. Functionally, one of the essential components for the initiation of protein synthesis. Stabilizes the binding of IF-2 and IF-3 on the 30S subunit to which N-formylmethionyl-tRNA(fMet) subsequently binds. Helps modulate mRNA selection, yielding the 30S pre-initiation complex (PIC). Upon addition of the 50S ribosomal subunit IF-1, IF-2 and IF-3 are released leaving the mature 70S translation initiation complex. This is Translation initiation factor IF-1 from Lacticaseibacillus paracasei (strain ATCC 334 / BCRC 17002 / CCUG 31169 / CIP 107868 / KCTC 3260 / NRRL B-441) (Lactobacillus paracasei).